The primary structure comprises 145 residues: Deoxyuridine 5'-triphosphate nucleotidohydrolase (145 aa).

It belongs to the dUTPase family. Requires Mg(2+) as cofactor.

It catalyses the reaction dUTP + H2O = dUMP + diphosphate + H(+). In terms of biological role, this enzyme is involved in nucleotide metabolism: it produces dUMP, the immediate precursor of thymidine nucleotides and it decreases the intracellular concentration of dUTP so that uracil cannot be incorporated into DNA. This chain is Deoxyuridine 5'-triphosphate nucleotidohydrolase (DUT), found in Fowlpox virus (strain NVSL) (FPV).